We begin with the raw amino-acid sequence, 306 residues long: Large ribosomal subunit protein mL45 (306 aa).

The protein belongs to the mitochondrion-specific ribosomal protein mL45 family. In terms of assembly, component of the mitochondrial ribosome large subunit (39S) which comprises a 16S rRNA and about 50 distinct proteins.

It is found in the mitochondrion. Functionally, component of the mitochondrial large ribosomal subunit (mt-LSU). Within the mitochondrial ribosomes, required to direct the nascent polypeptide toward the tunnel exit and position the exit at a distance from the membrane surface. This chain is Large ribosomal subunit protein mL45 (MRPL45), found in Bos taurus (Bovine).